A 312-amino-acid chain; its full sequence is Translation initiation factor IF3-2, chloroplastic (312 aa).

A chloroplast-targeting transit peptide spans 1–55; it reads MAGITSSTVGFNAVFTGITKTVSSHSLFSVDSKLCSLRLSKTELSFTNLTPSPRR. Residues 253–263 show a composition bias toward basic and acidic residues; that stretch reads EMIRKPQEPPT. Positions 253-312 are disordered; the sequence is EMIRKPQEPPTRKKKKTAENEASASAAEITAEPEPEPEPEPEPEPEPEPEPEPEPLQIDS. Residues 272–282 show a composition bias toward low complexity; that stretch reads NEASASAAEIT. The segment covering 283 to 305 has biased composition (acidic residues); sequence AEPEPEPEPEPEPEPEPEPEPEP.

It belongs to the IF-3 family. As to quaternary structure, monomer. In terms of tissue distribution, highly expressed in young, newly emerged leaves.

It localises to the plastid. It is found in the chloroplast. In terms of biological role, chloroplast translation initiation factor that is essential for the coordination of leaf and chloroplast development. IF-3 binds to the 30S ribosomal subunit and shifts the equilibrium between 70S ribosomes and their 50S and 30S subunits in favor of the free subunits, thus enhancing the availability of 30S subunits on which protein synthesis initiation begins. The polypeptide is Translation initiation factor IF3-2, chloroplastic (Arabidopsis thaliana (Mouse-ear cress)).